The following is a 195-amino-acid chain: PAP fimbrial minor pilin protein (195 aa).

Residues 1–22 (MRLRFSVPLFFFGCVFVHGVFA) form the signal peptide. A disulfide bridge connects residues C58 and C97.

This sequence belongs to the fimbrial protein family.

It localises to the secreted. Its subcellular location is the fimbrium. Functionally, fimbriae (also called pili), polar filaments radiating from the surface of the bacterium to a length of 0.5-1.5 micrometers and numbering 100-300 per cell, enable bacteria to colonize the epithelium of specific host organs. PapH seems to anchor the pilus to the bacterial cell. In addition the stoichiometric relationship between PapH and PapA determines the pilus length. The polypeptide is PAP fimbrial minor pilin protein (papH) (Escherichia coli).